The primary structure comprises 520 residues: MIARQQCVRGGPRGFSCGSAIVGGGKRGAFSSVSMSGGAGRCSSGGFGSRSLYNLRGNKSISMSVAGSRQGACFGGAGGFGTGGFGGGFGGSFSGKGGPGFPVCPAGGIQEVTINQSLLTPLHVEIDPEIQKVRTEEREQIKLLNNKFASFIDKVQFLEQQNKVLETKWNLLQQQTTTTSSKNLEPLFETYLSVLRKQLDTLGNDKGRLQSELKTMQDSVEDFKTKYEEEINKRTAAENDFVVLKKDVDAAYLNKVELEAKVDSLNDEINFLKVLYDAELSQMQTHVSDTSVVLSMDNNRNLDLDSIIAEVRAQYEEIAQRSKAEAEALYQTKVQQLQISVDQHGDNLKNTKSEIAELNRMIQRLRAEIENIKKQCQTLQVSVADAEQRGENALKDAHSKRVELEAALQQAKEELARMLREYQELMSVKLALDIEIATYRKLLEGEEYRMSGECQSAVSISVVSGSTSTGGISGGLGSGSGFGLSSGFGSGSGSGFGFGGSVSGSSSSKIISTTTLNKRR.

The tract at residues 1 to 136 (MIARQQCVRG…DPEIQKVRTE (136 aa)) is head. The residue at position 13 (arginine 13) is an Omega-N-methylarginine. A coil 1A region spans residues 137–172 (EREQIKLLNNKFASFIDKVQFLEQQNKVLETKWNLL). An IF rod domain is found at 137-450 (EREQIKLLNN…KLLEGEEYRM (314 aa)). Positions 173-191 (QQQTTTTSSKNLEPLFETY) are linker 1. Positions 192–284 (LSVLRKQLDT…LYDAELSQMQ (93 aa)) are coil 1B. Residues 285 to 307 (THVSDTSVVLSMDNNRNLDLDSI) are linker 12. The tract at residues 308 to 447 (IAEVRAQYEE…TYRKLLEGEE (140 aa)) is coil 2. Residues 448–520 (YRMSGECQSA…ISTTTLNKRR (73 aa)) form a tail region. The segment at 500-520 (GSVSGSSSSKIISTTTLNKRR) is disordered. Low complexity predominate over residues 503-514 (SGSSSSKIISTT).

It belongs to the intermediate filament family. As to quaternary structure, heterotetramer of two type I and two type II keratins. Keratin-4 is generally associated with keratin-13. In terms of tissue distribution, detected in the suprabasal layer of the stratified epithelium of the esophagus, exocervix, vagina, mouth and lingual mucosa, and in cells and cell clusters in the mucosa and serous gland ducts of the esophageal submucosa (at protein level). Expressed widely in the exocervix and esophageal epithelium, with lowest levels detected in the basal cell layer.

The polypeptide is Keratin, type II cytoskeletal 4 (KRT4) (Homo sapiens (Human)).